Reading from the N-terminus, the 232-residue chain is MNEFKQLSWQGLWKNNPALVQLLGLCPLLAVTATVTNGLGLGLATTLVLIGSNATVSIIRNLVPNEIRIPIFVMIIAAFVTVVQLLMNAYTYELYQALGIFIPLIVTNCAIIGRAEAYASKNPIGYAAFDGLMMGLGFTVVLVLLGAMRELLGYGTLFAGANLLLGDWATSLKVTIFTTDSPFLLAILPPGAFLGMGLLIAAKNILDKRFERMFAAKQEAKVVQRARVTAET.

The next 6 membrane-spanning stretches (helical) occupy residues 18–38, 39–59, 69–89, 93–113, 128–148, and 182–202; these read ALVQLLGLCPLLAVTATVTNG, LGLGLATTLVLIGSNATVSII, IPIFVMIIAAFVTVVQLLMNA, ELYQALGIFIPLIVTNCAIIG, AFDGLMMGLGFTVVLVLLGAM, and PFLLAILPPGAFLGMGLLIAA.

Belongs to the NqrDE/RnfAE family. In terms of assembly, the complex is composed of six subunits: RnfA, RnfB, RnfC, RnfD, RnfE and RnfG.

The protein resides in the cell inner membrane. Functionally, part of a membrane-bound complex that couples electron transfer with translocation of ions across the membrane. In Pseudoalteromonas atlantica (strain T6c / ATCC BAA-1087), this protein is Ion-translocating oxidoreductase complex subunit E.